Here is a 97-residue protein sequence, read N- to C-terminus: Acylphosphatase (97 aa).

The Acylphosphatase-like domain occupies 7 to 97 (RLTAWVHGHV…QERFEGFVER (91 aa)). Catalysis depends on residues arginine 22 and asparagine 40.

This sequence belongs to the acylphosphatase family.

The catalysed reaction is an acyl phosphate + H2O = a carboxylate + phosphate + H(+). The chain is Acylphosphatase (acyP) from Mycobacterium avium (strain 104).